We begin with the raw amino-acid sequence, 408 residues long: Argininosuccinate synthase (408 aa).

Residues 10–18 (AYSGGLDTS) and A37 each bind ATP. L-citrulline contacts are provided by Y90 and S95. G120 is an ATP binding site. T122, N126, and D127 together coordinate L-aspartate. An L-citrulline-binding site is contributed by N126. Residues R130, S181, S190, E266, and Y278 each contribute to the L-citrulline site.

The protein belongs to the argininosuccinate synthase family. Type 1 subfamily. As to quaternary structure, homotetramer.

The protein resides in the cytoplasm. The catalysed reaction is L-citrulline + L-aspartate + ATP = 2-(N(omega)-L-arginino)succinate + AMP + diphosphate + H(+). Its pathway is amino-acid biosynthesis; L-arginine biosynthesis; L-arginine from L-ornithine and carbamoyl phosphate: step 2/3. The protein is Argininosuccinate synthase of Cereibacter sphaeroides (strain ATCC 17029 / ATH 2.4.9) (Rhodobacter sphaeroides).